Here is a 558-residue protein sequence, read N- to C-terminus: Alpha-1,3-mannosyltransferase MNT2 (558 aa).

Topologically, residues 1–6 (MRRKNR) are cytoplasmic. A helical; Signal-anchor for type II membrane protein membrane pass occupies residues 7–27 (LFILVVLLGIVLVVYYSQLNS). The Lumenal segment spans residues 28–558 (LDLVEPVQSS…QIVDIWNKDI (531 aa)). A glycan (N-linked (GlcNAc...) asparagine) is linked at N187.

The protein belongs to the MNN1/MNT family.

It is found in the golgi apparatus membrane. It participates in protein modification; protein glycosylation. In terms of biological role, mannosyltransferase involved in adding the 4th and 5th mannose residues of O-linked glycans. This is Alpha-1,3-mannosyltransferase MNT2 (MNT2) from Saccharomyces cerevisiae (strain ATCC 204508 / S288c) (Baker's yeast).